Reading from the N-terminus, the 84-residue chain is Turripeptide IX-03 (84 aa).

An N-terminal signal peptide occupies residues 1–21 (MGFYMLLTVALLLTSLMNVEA). The propeptide occupies 22 to 39 (TPVDQAERSALEKSGLGN). 3 cysteine pairs are disulfide-bonded: C48–C70, C55–C74, and C60–C81.

As to expression, expressed by the venom duct.

The protein localises to the secreted. In Gemmula speciosa (Splendid gem-turris), this protein is Turripeptide IX-03.